The sequence spans 135 residues: D-ribose pyranase (135 aa).

The active-site Proton donor is His20. Substrate contacts are provided by residues Asp28, His102, and 124-126; that span reads YAN.

The protein belongs to the RbsD / FucU family. RbsD subfamily. As to quaternary structure, homodecamer.

Its subcellular location is the cytoplasm. The catalysed reaction is beta-D-ribopyranose = beta-D-ribofuranose. It functions in the pathway carbohydrate metabolism; D-ribose degradation; D-ribose 5-phosphate from beta-D-ribopyranose: step 1/2. In terms of biological role, catalyzes the interconversion of beta-pyran and beta-furan forms of D-ribose. In Rhodopirellula baltica (strain DSM 10527 / NCIMB 13988 / SH1), this protein is D-ribose pyranase.